The primary structure comprises 216 residues: PRA1 family protein B6 (216 aa).

Ala-2 bears the N-acetylalanine mark. Helical transmembrane passes span 83–103 (LVAI…FLLA), 105–125 (LAAS…LVIG), 135–155 (LGIL…GSLL), 159–179 (LAVG…EDLF), and 186–206 (IGSG…AAAI).

It belongs to the PRA1 family. Interacts with PRA1B1, PRA1B2, PRA1B3, PRA1B4, PRA1B5 and PRA1E. Expressed in hypocotyls, roots, lateral roots, lateral root caps, columella cells, leaves and stomata.

Its subcellular location is the endoplasmic reticulum membrane. Its function is as follows. May be involved in both secretory and endocytic intracellular trafficking in the endosomal/prevacuolar compartments. In Arabidopsis thaliana (Mouse-ear cress), this protein is PRA1 family protein B6 (PRA1B6).